The sequence spans 201 residues: Phosphoheptose isomerase 2 (201 aa).

Residues 39–198 enclose the SIS domain; the sequence is VIKAYKNGNK…EEELFGKGFS (160 aa). Residue 54-56 coordinates substrate; sequence NGG. Residues histidine 63 and glutamate 67 each coordinate Zn(2+). Residues glutamate 67, 96 to 97, 122 to 124, serine 127, and glutamine 174 contribute to the substrate site; these read ND and STS. The Zn(2+) site is built by glutamine 174 and histidine 182.

It belongs to the SIS family. GmhA subfamily. As to quaternary structure, homotetramer. The cofactor is Zn(2+).

It localises to the cytoplasm. It catalyses the reaction 2 D-sedoheptulose 7-phosphate = D-glycero-alpha-D-manno-heptose 7-phosphate + D-glycero-beta-D-manno-heptose 7-phosphate. It functions in the pathway carbohydrate biosynthesis; D-glycero-D-manno-heptose 7-phosphate biosynthesis; D-glycero-alpha-D-manno-heptose 7-phosphate and D-glycero-beta-D-manno-heptose 7-phosphate from sedoheptulose 7-phosphate: step 1/1. The protein operates within capsule biogenesis; capsule polysaccharide biosynthesis. Functionally, catalyzes the isomerization of sedoheptulose 7-phosphate in D-glycero-D-manno-heptose 7-phosphate. No activity with L-galacto-heptulose, L-galacto-heptulose 7-phosphate or D-manno-heptulose. The sequence is that of Phosphoheptose isomerase 2 from Campylobacter jejuni subsp. jejuni serotype O:2 (strain ATCC 700819 / NCTC 11168).